The primary structure comprises 403 residues: Glutamyl-tRNA reductase 2 (403 aa).

Substrate is bound by residues 47–50 (TCHR), S98, 103–105 (ETD), and Q109. C48 acts as the Nucleophile in catalysis. 177–182 (GAGAVG) lines the NADP(+) pocket.

The protein belongs to the glutamyl-tRNA reductase family. Homodimer.

It catalyses the reaction (S)-4-amino-5-oxopentanoate + tRNA(Glu) + NADP(+) = L-glutamyl-tRNA(Glu) + NADPH + H(+). It participates in porphyrin-containing compound metabolism; protoporphyrin-IX biosynthesis; 5-aminolevulinate from L-glutamyl-tRNA(Glu): step 1/2. Functionally, catalyzes the NADPH-dependent reduction of glutamyl-tRNA(Glu) to glutamate 1-semialdehyde (GSA). The chain is Glutamyl-tRNA reductase 2 from Pyrobaculum arsenaticum (strain DSM 13514 / JCM 11321 / PZ6).